The sequence spans 447 residues: Argininosuccinate synthase (447 aa).

ATP-binding positions include 17 to 25 and alanine 43; that span reads AFSGGLDTS. Tyrosine 99 contributes to the L-citrulline binding site. ATP contacts are provided by glycine 129 and threonine 131. L-aspartate-binding residues include threonine 131, asparagine 135, and aspartate 136. Asparagine 135 is a binding site for L-citrulline. Aspartate 136 provides a ligand contact to ATP. Arginine 139 and serine 192 together coordinate L-citrulline. Aspartate 194 serves as a coordination point for ATP. Positions 201, 203, and 280 each coordinate L-citrulline.

It belongs to the argininosuccinate synthase family. Type 2 subfamily. In terms of assembly, homotetramer.

The protein localises to the cytoplasm. It carries out the reaction L-citrulline + L-aspartate + ATP = 2-(N(omega)-L-arginino)succinate + AMP + diphosphate + H(+). It functions in the pathway amino-acid biosynthesis; L-arginine biosynthesis; L-arginine from L-ornithine and carbamoyl phosphate: step 2/3. This chain is Argininosuccinate synthase, found in Escherichia coli O8 (strain IAI1).